Reading from the N-terminus, the 259-residue chain is Methyltransferase afvD (259 aa).

Belongs to the class I-like SAM-binding methyltransferase superfamily.

It participates in secondary metabolite biosynthesis. In terms of biological role, methyltransferase; part of the gene cluster that mediates the biosynthesis of aflavarin, a bicoumarin that exhibits anti-insectan activity against the fungivorous beetle C.hemipterus. In Aspergillus flavus (strain ATCC 200026 / FGSC A1120 / IAM 13836 / NRRL 3357 / JCM 12722 / SRRC 167), this protein is Methyltransferase afvD.